Here is a 512-residue protein sequence, read N- to C-terminus: Sucrose-6-phosphate hydrolase (512 aa).

Substrate is bound by residues 40 to 43 (WMND), Gln-59, Trp-67, 102 to 103 (FS), 165 to 166 (RD), Glu-229, and Trp-311. Asp-43 is a catalytic residue.

It belongs to the glycosyl hydrolase 32 family.

The protein localises to the cytoplasm. It catalyses the reaction Hydrolysis of terminal non-reducing beta-D-fructofuranoside residues in beta-D-fructofuranosides.. It participates in glycan biosynthesis; sucrose metabolism. The sequence is that of Sucrose-6-phosphate hydrolase (sacA) from Zymomonas mobilis subsp. mobilis (strain ATCC 10988 / DSM 424 / LMG 404 / NCIMB 8938 / NRRL B-806 / ZM1).